A 337-amino-acid chain; its full sequence is Aspartate carbamoyltransferase catalytic subunit (337 aa).

Residues Arg54 and Thr55 each contribute to the carbamoyl phosphate site. Lys82 contributes to the L-aspartate binding site. 3 residues coordinate carbamoyl phosphate: Arg104, His134, and Gln137. Residues Arg177 and Arg232 each coordinate L-aspartate. Carbamoyl phosphate-binding residues include Gly277 and Pro278.

This sequence belongs to the aspartate/ornithine carbamoyltransferase superfamily. ATCase family. Heterododecamer (2C3:3R2) of six catalytic PyrB chains organized as two trimers (C3), and six regulatory PyrI chains organized as three dimers (R2).

The enzyme catalyses carbamoyl phosphate + L-aspartate = N-carbamoyl-L-aspartate + phosphate + H(+). Its pathway is pyrimidine metabolism; UMP biosynthesis via de novo pathway; (S)-dihydroorotate from bicarbonate: step 2/3. Catalyzes the condensation of carbamoyl phosphate and aspartate to form carbamoyl aspartate and inorganic phosphate, the committed step in the de novo pyrimidine nucleotide biosynthesis pathway. This Arthrobacter sp. (strain FB24) protein is Aspartate carbamoyltransferase catalytic subunit.